The chain runs to 592 residues: NADH-quinone oxidoreductase subunit C/D (592 aa).

The interval 1-183 (MLTEFNSIPA…GPYILTEEKE (183 aa)) is NADH dehydrogenase I subunit C. The segment at 207–592 (DFMFLNLGPN…IDFVMADVDR (386 aa)) is NADH dehydrogenase I subunit D.

In the N-terminal section; belongs to the complex I 30 kDa subunit family. This sequence in the C-terminal section; belongs to the complex I 49 kDa subunit family. As to quaternary structure, NDH-1 is composed of 13 different subunits. Subunits NuoB, CD, E, F, and G constitute the peripheral sector of the complex.

The protein resides in the cell inner membrane. The enzyme catalyses a quinone + NADH + 5 H(+)(in) = a quinol + NAD(+) + 4 H(+)(out). In terms of biological role, NDH-1 shuttles electrons from NADH, via FMN and iron-sulfur (Fe-S) centers, to quinones in the respiratory chain. The immediate electron acceptor for the enzyme in this species is believed to be ubiquinone. Couples the redox reaction to proton translocation (for every two electrons transferred, four hydrogen ions are translocated across the cytoplasmic membrane), and thus conserves the redox energy in a proton gradient. The chain is NADH-quinone oxidoreductase subunit C/D from Acidiphilium cryptum (strain JF-5).